A 488-amino-acid chain; its full sequence is Glutamyl-tRNA(Gln) amidotransferase subunit A (488 aa).

Catalysis depends on charge relay system residues Lys-77 and Ser-152. The active-site Acyl-ester intermediate is Ser-176.

Belongs to the amidase family. GatA subfamily. In terms of assembly, heterotrimer of A, B and C subunits.

The enzyme catalyses L-glutamyl-tRNA(Gln) + L-glutamine + ATP + H2O = L-glutaminyl-tRNA(Gln) + L-glutamate + ADP + phosphate + H(+). In terms of biological role, allows the formation of correctly charged Gln-tRNA(Gln) through the transamidation of misacylated Glu-tRNA(Gln) in organisms which lack glutaminyl-tRNA synthetase. The reaction takes place in the presence of glutamine and ATP through an activated gamma-phospho-Glu-tRNA(Gln). This is Glutamyl-tRNA(Gln) amidotransferase subunit A from Streptococcus pyogenes serotype M18 (strain MGAS8232).